Consider the following 569-residue polypeptide: 4-coumarate-CoA ligase 2 (569 aa).

The segment at 1 to 24 (MITIAESHPQIHHSPPDTTAPSTP) is disordered. ATP contacts are provided by residues 216–220 (SSGTT), histidine 265, 337–339 (AAP), 359–360 (QG), threonine 364, aspartate 448, arginine 463, and lysine 554. Positions 290 to 359 (EMEGMLETIQ…GRLPQAVLGQ (70 aa)) are SBD1. An SBD2 region spans residues 360–427 (GYGMTEAGPV…VRGPQIMKGY (68 aa)).

Belongs to the ATP-dependent AMP-binding enzyme family. As to expression, mostly expressed in stems, and, to a lower extent, in bulbs.

The catalysed reaction is (E)-4-coumarate + ATP + CoA = (E)-4-coumaroyl-CoA + AMP + diphosphate. It functions in the pathway phytoalexin biosynthesis; 3,4',5-trihydroxystilbene biosynthesis; 3,4',5-trihydroxystilbene from trans-4-coumarate: step 1/2. Its function is as follows. Produces CoA thioesters of a variety of hydroxy- and methoxy-substituted cinnamic acids, which are used to synthesize several phenylpropanoid-derived compounds, including anthocyanins, flavonoids, isoflavonoids, coumarins, lignin, suberin and wall-bound phenolics. The polypeptide is 4-coumarate-CoA ligase 2 (Narcissus pseudonarcissus (Daffodil)).